The primary structure comprises 119 residues: Holo-[acyl-carrier-protein] synthase (119 aa).

The Mg(2+) site is built by Asp-2 and Glu-51.

It belongs to the P-Pant transferase superfamily. AcpS family. The cofactor is Mg(2+).

The protein resides in the cytoplasm. The catalysed reaction is apo-[ACP] + CoA = holo-[ACP] + adenosine 3',5'-bisphosphate + H(+). Its function is as follows. Transfers the 4'-phosphopantetheine moiety from coenzyme A to a Ser of acyl-carrier-protein. This Chlorobium luteolum (strain DSM 273 / BCRC 81028 / 2530) (Pelodictyon luteolum) protein is Holo-[acyl-carrier-protein] synthase.